Consider the following 310-residue polypeptide: Tagatose-6-phosphate kinase (310 aa).

Belongs to the carbohydrate kinase PfkB family. LacC subfamily.

The catalysed reaction is D-tagatofuranose 6-phosphate + ATP = D-tagatofuranose 1,6-bisphosphate + ADP + H(+). The protein operates within carbohydrate metabolism; D-tagatose 6-phosphate degradation; D-glyceraldehyde 3-phosphate and glycerone phosphate from D-tagatose 6-phosphate: step 1/2. This is Tagatose-6-phosphate kinase from Staphylococcus aureus (strain MRSA252).